Here is a 527-residue protein sequence, read N- to C-terminus: L-amino-acid oxidase (527 aa).

A signal peptide spans 1–27 (MDLHRAPWKSSAAAAVLLLALFSGAAA). A disulfide bond links cysteine 37 and cysteine 200. Residue asparagine 58 is glycosylated (N-linked (GlcNAc...) asparagine). FAD-binding positions include 70–71 (VA), 90–91 (EA), arginine 98, 114–117 (GAMR), and valine 288. Substrate is bound at residue arginine 117. An N-linked (GlcNAc...) asparagine glycan is attached at asparagine 393. Tyrosine 403 serves as a coordination point for substrate. FAD-binding positions include glutamate 485 and 492-497 (AWMESA). Residue 492 to 493 (AW) coordinates substrate.

In terms of assembly, homodimer. Requires FAD as cofactor. As to expression, expression mainly observed in plasma, spleen, kidney and gills with low levels detected in blood and no expression detected in brain, liver, heart, muscle or intestine (at protein level).

Its subcellular location is the secreted. It carries out the reaction an L-alpha-amino acid + O2 + H2O = a 2-oxocarboxylate + H2O2 + NH4(+). Functionally, inhibits the growth of both Gram-negative and Gram-positive bacteria. Displays strong antibacterial activity towards V.cholerae and E.tarda. Causes deformation of the surface of S.aureus and the formation of pores on the surface of E.coli. Strong antiparasitic activity is seen towards C.irritans, T.brucei and I.multifiliis. Cilia of treated theronts are lost and the macronucleus swells, inducing cell membrane rupture and efflux of the cytoplasm. This chain is L-amino-acid oxidase, found in Siganus canaliculatus (White-spotted spinefoot).